A 463-amino-acid chain; its full sequence is MTTETRSLYSQLPAIDRLLHDSSFLSLRDTYGHTRVVELLRQMLDEAREVIRDSQTLPAWCENWAQEVDARLTKEAQSALRPVINLTGTVLHTNLGRALQAEAAVEAVAQAMRSPVTLEYDLDDAGRGHRDRALAQLLCRITGAEDACIVNNNAAAVLLMLAATASGKEVVVSRGELVEIGGAFRIPDVMRQAGCTLHEVGTTNRTHANDYRQAVNENTALLMKVHTSNYSIQGFTKAIDEAELVALGKELDVPVVTDLGSGSLVDLSQYGLPKEPMPQELIAAGVSLVSFSGDKLLGGPQAGIIVGKKEMIARLQSHPLKRALRADKMTLAALEATLRLYLHPEALSEKLPTLRLLTRSAEVIQIQAQRLQAPLAAHYGAEFAVQVMPCLSQIGSGSLPVDRLPSAALTFTPHDGRGSHLESLAARWRELPVPVIGRIYDGRLWLDLRCLEDEQRFLEMLLK.

At Lys-295 the chain carries N6-(pyridoxal phosphate)lysine.

The protein belongs to the SelA family. As to quaternary structure, homodecamer; pentamer of dimers. Binds only one seryl-tRNA(Sec) per dimer. Requires pyridoxal 5'-phosphate as cofactor.

It is found in the cytoplasm. It catalyses the reaction L-seryl-tRNA(Sec) + selenophosphate + H(+) = L-selenocysteinyl-tRNA(Sec) + phosphate. It participates in aminoacyl-tRNA biosynthesis; selenocysteinyl-tRNA(Sec) biosynthesis; selenocysteinyl-tRNA(Sec) from L-seryl-tRNA(Sec) (bacterial route): step 1/1. In terms of biological role, converts seryl-tRNA(Sec) to selenocysteinyl-tRNA(Sec) required for selenoprotein biosynthesis. This Shigella boydii serotype 4 (strain Sb227) protein is L-seryl-tRNA(Sec) selenium transferase.